The sequence spans 117 residues: Large ribosomal subunit protein eL34 (117 aa).

Phosphoserine is present on Ser-12. Positions Ala-16–Gln-28 are enriched in polar residues. Residues Ala-16–His-35 are disordered. Residue Lys-108 forms a Glycyl lysine isopeptide (Lys-Gly) (interchain with G-Cter in SUMO2) linkage.

This sequence belongs to the eukaryotic ribosomal protein eL34 family. As to quaternary structure, component of the large ribosomal subunit.

It is found in the cytoplasm. The protein localises to the cytosol. Its subcellular location is the endoplasmic reticulum. In terms of biological role, component of the large ribosomal subunit. The ribosome is a large ribonucleoprotein complex responsible for the synthesis of proteins in the cell. This Vicugna pacos (Alpaca) protein is Large ribosomal subunit protein eL34 (RPL34).